Reading from the N-terminus, the 348-residue chain is Dihydroorotase (348 aa).

2 residues coordinate Zn(2+): H14 and H16. Substrate contacts are provided by residues 16–18 (HLR) and N42. 3 residues coordinate Zn(2+): K100, H137, and H175. An N6-carboxylysine modification is found at K100. H137 is a binding site for substrate. Position 220 (L220) interacts with substrate. D248 contacts Zn(2+). D248 is an active-site residue. Positions 252 and 264 each coordinate substrate.

Belongs to the metallo-dependent hydrolases superfamily. DHOase family. Class II DHOase subfamily. As to quaternary structure, homodimer. Requires Zn(2+) as cofactor.

It carries out the reaction (S)-dihydroorotate + H2O = N-carbamoyl-L-aspartate + H(+). Its pathway is pyrimidine metabolism; UMP biosynthesis via de novo pathway; (S)-dihydroorotate from bicarbonate: step 3/3. Catalyzes the reversible cyclization of carbamoyl aspartate to dihydroorotate. The protein is Dihydroorotase of Synechococcus sp. (strain CC9605).